Reading from the N-terminus, the 529-residue chain is Peptide chain release factor 3 (529 aa).

Residues 11–280 form the tr-type G domain; it reads AKRRTFAIIS…GLVEWAPAPM (270 aa). GTP is bound by residues 20-27, 88-92, and 142-145; these read SHPDAGKT, DTPGH, and NKLD.

This sequence belongs to the TRAFAC class translation factor GTPase superfamily. Classic translation factor GTPase family. PrfC subfamily.

It is found in the cytoplasm. Functionally, increases the formation of ribosomal termination complexes and stimulates activities of RF-1 and RF-2. It binds guanine nucleotides and has strong preference for UGA stop codons. It may interact directly with the ribosome. The stimulation of RF-1 and RF-2 is significantly reduced by GTP and GDP, but not by GMP. In Klebsiella pneumoniae subsp. pneumoniae (strain ATCC 700721 / MGH 78578), this protein is Peptide chain release factor 3.